Reading from the N-terminus, the 359-residue chain is Probable cinnamyl alcohol dehydrogenase 8A (359 aa).

Cys45 provides a ligand contact to Zn(2+). Thr47 is a binding site for NADP(+). Zn(2+) is bound by residues His67, Glu68, Cys98, Cys101, Cys104, Cys112, and Cys161. NADP(+)-binding positions include Thr165, 186–191 (GLGGLG), 209–214 (SSSPAK), Thr249, Gly273, and 296–298 (SGG).

It belongs to the zinc-containing alcohol dehydrogenase family. Homodimer. It depends on Zn(2+) as a cofactor.

It carries out the reaction (E)-cinnamyl alcohol + NADP(+) = (E)-cinnamaldehyde + NADPH + H(+). It catalyses the reaction (E)-coniferol + NADP(+) = (E)-coniferaldehyde + NADPH + H(+). The catalysed reaction is (E)-sinapyl alcohol + NADP(+) = (E)-sinapaldehyde + NADPH + H(+). The enzyme catalyses (E)-4-coumaroyl alcohol + NADP(+) = (E)-4-coumaraldehyde + NADPH + H(+). It carries out the reaction (E)-caffeyl alcohol + NADP(+) = (E)-caffeyl aldehyde + NADPH + H(+). It participates in aromatic compound metabolism; phenylpropanoid biosynthesis. In terms of biological role, involved in lignin biosynthesis. Catalyzes the final step specific for the production of lignin monomers. Catalyzes the NADPH-dependent reduction of coniferaldehyde, 5-hydroxyconiferaldehyde, sinapaldehyde, 4-coumaraldehyde and caffeyl aldehyde to their respective alcohols. The sequence is that of Probable cinnamyl alcohol dehydrogenase 8A from Oryza sativa subsp. japonica (Rice).